A 286-amino-acid polypeptide reads, in one-letter code: tRNA (guanine-N(7)-)-methyltransferase (286 aa).

Residues G103, 126–127, 161–162, and C181 each bind S-adenosyl-L-methionine; these read EI and NA. D184 is an active-site residue. 259 to 261 provides a ligand contact to S-adenosyl-L-methionine; sequence TEE.

This sequence belongs to the class I-like SAM-binding methyltransferase superfamily. TrmB family. As to quaternary structure, forms a complex with TRM82.

Its subcellular location is the nucleus. The catalysed reaction is guanosine(46) in tRNA + S-adenosyl-L-methionine = N(7)-methylguanosine(46) in tRNA + S-adenosyl-L-homocysteine. It functions in the pathway tRNA modification; N(7)-methylguanine-tRNA biosynthesis. In terms of biological role, catalyzes the formation of N(7)-methylguanine at position 46 (m7G46) in tRNA. This is tRNA (guanine-N(7)-)-methyltransferase from Vanderwaltozyma polyspora (strain ATCC 22028 / DSM 70294 / BCRC 21397 / CBS 2163 / NBRC 10782 / NRRL Y-8283 / UCD 57-17) (Kluyveromyces polysporus).